The chain runs to 291 residues: MIQIFFLGTGAGSPSKKRKLPAFLVRREGLNILLDCGEGTQYTLMNNKLGINSIKIIGITHMHGDHVFGLLGVIASMGLLDRKETLYILGPRDLKDFLYTSFEYSKFNPSFKIEFIDNYNDQNITIATFKTCHTVESQGYLISERDRVKIDEEKLEKEKIKDWRVMRKLKEGKTVEYNGKFLKPEDYLVIKRGLKVAYTGDTIPCQSVIESVKGVDLLIHDSTFLNEPSAFTYGHSNVADAAKVALEASVKLLALTHISPRYEDVTEHLKVARRIFPKSILPDDLSYITLK.

His61, His63, Asp65, His66, His133, Asp201, and His257 together coordinate Zn(2+). The active-site Proton acceptor is the Asp65.

It belongs to the RNase Z family. As to quaternary structure, homodimer. Zn(2+) serves as cofactor.

The catalysed reaction is Endonucleolytic cleavage of RNA, removing extra 3' nucleotides from tRNA precursor, generating 3' termini of tRNAs. A 3'-hydroxy group is left at the tRNA terminus and a 5'-phosphoryl group is left at the trailer molecule.. Zinc phosphodiesterase, which displays some tRNA 3'-processing endonuclease activity. Probably involved in tRNA maturation, by removing a 3'-trailer from precursor tRNA. This Saccharolobus islandicus (strain Y.N.15.51 / Yellowstone #2) (Sulfolobus islandicus) protein is Ribonuclease Z.